Consider the following 296-residue polypeptide: Cytidine deaminase (296 aa).

CMP/dCMP-type deaminase domains are found at residues 47–167 and 186–296; these read TEAE…FGPK and DSSD…VDPV. Residue 88–90 participates in substrate binding; sequence NLE. Histidine 101 lines the Zn(2+) pocket. The active-site Proton donor is the glutamate 103. Residues cysteine 128 and cysteine 131 each contribute to the Zn(2+) site.

The protein belongs to the cytidine and deoxycytidylate deaminase family. Homodimer. Zn(2+) is required as a cofactor.

It carries out the reaction cytidine + H2O + H(+) = uridine + NH4(+). It catalyses the reaction 2'-deoxycytidine + H2O + H(+) = 2'-deoxyuridine + NH4(+). In terms of biological role, this enzyme scavenges exogenous and endogenous cytidine and 2'-deoxycytidine for UMP synthesis. The sequence is that of Cytidine deaminase from Shewanella sp. (strain ANA-3).